The primary structure comprises 382 residues: Mannitol-1-phosphate 5-dehydrogenase (382 aa).

3 to 14 (ALHFGAGNIGRG) is an NAD(+) binding site.

Belongs to the mannitol dehydrogenase family.

It carries out the reaction D-mannitol 1-phosphate + NAD(+) = beta-D-fructose 6-phosphate + NADH + H(+). In Mannheimia succiniciproducens (strain KCTC 0769BP / MBEL55E), this protein is Mannitol-1-phosphate 5-dehydrogenase.